The following is a 132-amino-acid chain: Large ribosomal subunit protein bL12 (132 aa).

Belongs to the bacterial ribosomal protein bL12 family. Homodimer. Part of the ribosomal stalk of the 50S ribosomal subunit. Forms a multimeric L10(L12)X complex, where L10 forms an elongated spine to which 2 to 4 L12 dimers bind in a sequential fashion. Binds GTP-bound translation factors.

Forms part of the ribosomal stalk which helps the ribosome interact with GTP-bound translation factors. Is thus essential for accurate translation. The sequence is that of Large ribosomal subunit protein bL12 from Chloroflexus aurantiacus (strain ATCC 29366 / DSM 635 / J-10-fl).